The chain runs to 404 residues: Arginine biosynthesis bifunctional protein ArgJ (404 aa).

6 residues coordinate substrate: Thr166, Lys189, Thr200, Glu280, Asn399, and Ser404. Thr200 functions as the Nucleophile in the catalytic mechanism.

Belongs to the ArgJ family. As to quaternary structure, heterotetramer of two alpha and two beta chains.

It localises to the cytoplasm. The enzyme catalyses N(2)-acetyl-L-ornithine + L-glutamate = N-acetyl-L-glutamate + L-ornithine. The catalysed reaction is L-glutamate + acetyl-CoA = N-acetyl-L-glutamate + CoA + H(+). Its pathway is amino-acid biosynthesis; L-arginine biosynthesis; L-ornithine and N-acetyl-L-glutamate from L-glutamate and N(2)-acetyl-L-ornithine (cyclic): step 1/1. It participates in amino-acid biosynthesis; L-arginine biosynthesis; N(2)-acetyl-L-ornithine from L-glutamate: step 1/4. Catalyzes two activities which are involved in the cyclic version of arginine biosynthesis: the synthesis of N-acetylglutamate from glutamate and acetyl-CoA as the acetyl donor, and of ornithine by transacetylation between N(2)-acetylornithine and glutamate. The chain is Arginine biosynthesis bifunctional protein ArgJ from Mycobacterium bovis (strain ATCC BAA-935 / AF2122/97).